The primary structure comprises 728 residues: 1,4-alpha-glucan branching enzyme GlgB (728 aa).

Asp405 serves as the catalytic Nucleophile. The Proton donor role is filled by Glu458.

This sequence belongs to the glycosyl hydrolase 13 family. GlgB subfamily. As to quaternary structure, monomer.

The enzyme catalyses Transfers a segment of a (1-&gt;4)-alpha-D-glucan chain to a primary hydroxy group in a similar glucan chain.. It functions in the pathway glycan biosynthesis; glycogen biosynthesis. Catalyzes the formation of the alpha-1,6-glucosidic linkages in glycogen by scission of a 1,4-alpha-linked oligosaccharide from growing alpha-1,4-glucan chains and the subsequent attachment of the oligosaccharide to the alpha-1,6 position. This Shigella dysenteriae serotype 1 (strain Sd197) protein is 1,4-alpha-glucan branching enzyme GlgB.